The sequence spans 58 residues: MLRWALIFFIIAIIAAVFGFGGIATAAAGIAKVLFYLFLVVAVVMLVSALLAGRNLTR.

Helical transmembrane passes span 4 to 24 and 33 to 53; these read WALI…GGIA and VLFY…LLAG.

It belongs to the UPF0391 family.

The protein resides in the cell membrane. The polypeptide is UPF0391 membrane protein GM21_0108 (Geobacter sp. (strain M21)).